The following is a 241-amino-acid chain: Pyridoxine 5'-phosphate synthase (241 aa).

N7 is a binding site for 3-amino-2-oxopropyl phosphate. 9–10 (DH) is a 1-deoxy-D-xylulose 5-phosphate binding site. Residue R18 coordinates 3-amino-2-oxopropyl phosphate. The active-site Proton acceptor is H43. Residues R45 and H50 each contribute to the 1-deoxy-D-xylulose 5-phosphate site. E70 (proton acceptor) is an active-site residue. T100 is a binding site for 1-deoxy-D-xylulose 5-phosphate. H191 (proton donor) is an active-site residue. 3-amino-2-oxopropyl phosphate-binding positions include G192 and 213-214 (GH).

This sequence belongs to the PNP synthase family. As to quaternary structure, homooctamer; tetramer of dimers.

It localises to the cytoplasm. The enzyme catalyses 3-amino-2-oxopropyl phosphate + 1-deoxy-D-xylulose 5-phosphate = pyridoxine 5'-phosphate + phosphate + 2 H2O + H(+). It functions in the pathway cofactor biosynthesis; pyridoxine 5'-phosphate biosynthesis; pyridoxine 5'-phosphate from D-erythrose 4-phosphate: step 5/5. Catalyzes the complicated ring closure reaction between the two acyclic compounds 1-deoxy-D-xylulose-5-phosphate (DXP) and 3-amino-2-oxopropyl phosphate (1-amino-acetone-3-phosphate or AAP) to form pyridoxine 5'-phosphate (PNP) and inorganic phosphate. The chain is Pyridoxine 5'-phosphate synthase from Acidithiobacillus ferrooxidans (strain ATCC 23270 / DSM 14882 / CIP 104768 / NCIMB 8455) (Ferrobacillus ferrooxidans (strain ATCC 23270)).